Consider the following 295-residue polypeptide: MNHLTTETRNIQTMHLDEMNLSDALKTMNQEDQLVPKAIEPVIPNLTKVIESAIQRFNNGGRIIYIGAGTSGRLGVLDAAECVPTFNVSPNDIIGIIAGGQKAMTVAIEGAEDDAEQGAQDLKNIHLQSKDIVVGISASGRTPYVKGALVYANKMNAETVALSCNVHSDISKNSNHVLEINVGPEVLTGSTRLKSGTAQKLVLNMISTMTMIGVGKVYDNLMVDLRPTNQKLIHRSIRIIQDVCDLNHQEAIELYEKSDHNIKIAIVMHLCSTTQQDARLRLKQNNGVIKQAINT.

The SIS domain occupies 53-216; that stretch reads AIQRFNNGGR…STMTMIGVGK (164 aa). Glu-81 functions as the Proton donor in the catalytic mechanism. The active site involves Glu-112.

Belongs to the GCKR-like family. MurNAc-6-P etherase subfamily. As to quaternary structure, homodimer.

It carries out the reaction N-acetyl-D-muramate 6-phosphate + H2O = N-acetyl-D-glucosamine 6-phosphate + (R)-lactate. The protein operates within amino-sugar metabolism; N-acetylmuramate degradation. Specifically catalyzes the cleavage of the D-lactyl ether substituent of MurNAc 6-phosphate, producing GlcNAc 6-phosphate and D-lactate. This is N-acetylmuramic acid 6-phosphate etherase from Staphylococcus epidermidis (strain ATCC 35984 / DSM 28319 / BCRC 17069 / CCUG 31568 / BM 3577 / RP62A).